A 561-amino-acid polypeptide reads, in one-letter code: MNINVADLLNGNYILLLFVVLALGLCLGKLRLGSVQLGNSIGVLVVSLLLGQQHFSINTDALNLGFMLFIFCVGVEAGPNFFSIFFRDGKNYLMLALVMVGSALLIALGLGKLFGWDIGLTAGMLAGSMTSTPVLVGAGDTLRHSGIASTQLSSALDNLSLGYALTYLIGLVSLIVGARYLPKLQHQDLQTSAQQIARERGLDTDANRKVYLPVIRAYRVGPELVAWTDGKNLRELGIYRQTGCYIERIRRNGILANPDGDAVLQMGDEIALVGYPDAHARLDPSFRNGKEVFDRDLLDMRIVTEEIVVKNHNAVGRRLAQLKLTDHGCFLNRVIRSQIEMPIDDNVVLNKGDVLQVSGDARRVKTIADRIGFISIHSQVTDLLAFCAFFIIGLMIGMITFQFRNFSFGIGNAAGLLFAGIMLGFLRANHPTFGYIPQGALNMVKEFGLMVFMAGVGLSAGSGISNGLGAVGGQMLIAGLVVSLIPVVICFLFGAYVLRMNRALLFGAMMGARTCAPAMEIISDTARSNIPALGYAGTYAIANVLLTLAGTLIVIIWPGLG.

The next 5 membrane-spanning stretches (helical) occupy residues 8–28 (LLNG…LCLG), 32–52 (LGSV…LLGQ), 66–86 (FMLF…SIFF), 94–114 (MLAL…GKLF), and 158–178 (NLSL…IVGA). RCK C-terminal domains follow at residues 200 to 288 (RGLD…SFRN) and 292 to 373 (VFDR…RIGF). The next 5 helical transmembrane spans lie at 383 to 403 (LLAF…TFQF), 406 to 426 (FSFG…LGFL), 447 to 467 (FGLM…ISNG), 475 to 495 (MLIA…LFGA), and 540 to 560 (AIAN…WPGL).

Belongs to the AAE transporter (TC 2.A.81) family. YbjL subfamily.

The protein localises to the cell membrane. This chain is Putative transport protein YbjL, found in Salmonella typhi.